The chain runs to 277 residues: Bifunctional protein FolD (277 aa).

Residues 160 to 162 (GAS), S185, and I226 contribute to the NADP(+) site.

Belongs to the tetrahydrofolate dehydrogenase/cyclohydrolase family. In terms of assembly, homodimer.

It carries out the reaction (6R)-5,10-methylene-5,6,7,8-tetrahydrofolate + NADP(+) = (6R)-5,10-methenyltetrahydrofolate + NADPH. It catalyses the reaction (6R)-5,10-methenyltetrahydrofolate + H2O = (6R)-10-formyltetrahydrofolate + H(+). The protein operates within one-carbon metabolism; tetrahydrofolate interconversion. Functionally, catalyzes the oxidation of 5,10-methylenetetrahydrofolate to 5,10-methenyltetrahydrofolate and then the hydrolysis of 5,10-methenyltetrahydrofolate to 10-formyltetrahydrofolate. This is Bifunctional protein FolD from Ruthia magnifica subsp. Calyptogena magnifica.